Here is a 102-residue protein sequence, read N- to C-terminus: Protein PDF (102 aa).

Positions 1–24 (MARYTYLVALVLLAICCQWGYCGA) are cleaved as a signal peptide. Ala-100 bears the Alanine amide mark.

This sequence belongs to the arthropod PDH family. In terms of tissue distribution, predominantly expressed in adult head. Expressed at higher level in males than in females. In adult brain, it is specifically expressed in the ventral lateral neurons (LNvs) as well as in 2-4 tritocerebral cells and 4-6 abdominal cells.

It is found in the secreted. Functionally, neuropeptide PDF is the main transmitter regulating circadian locomotor rhythms. Required to maintain behavioral rhythms under constant conditions by coordinating pacemaker interactions in the circadian system. Together with CCHa1, involved in regulating intensity and periodicity of daytime activity, possibly by modulating rhythmic expression of circadian protein PER/period in a subset of clock neurons, but not TIM/timeless. Acts on small and large ventral lateral neurons to control sleep and regulates the state transition from sleep to wake. This chain is Protein PDF (Pdf), found in Drosophila melanogaster (Fruit fly).